Reading from the N-terminus, the 750-residue chain is 5-methyltetrahydropteroyltriglutamate--homocysteine methyltransferase (750 aa).

Residues 15-18 and lysine 114 each bind 5-methyltetrahydropteroyltri-L-glutamate; that span reads RELK. L-homocysteine is bound by residues 425 to 427 and glutamate 478; that span reads IGS. Residues 425–427 and glutamate 478 contribute to the L-methionine site; that span reads IGS. Residue tryptophan 555 participates in 5-methyltetrahydropteroyltri-L-glutamate binding. Residue aspartate 593 coordinates L-homocysteine. Residue aspartate 593 participates in L-methionine binding. 5-methyltetrahydropteroyltri-L-glutamate is bound at residue glutamate 599. Positions 636, 638, and 660 each coordinate Zn(2+). Catalysis depends on histidine 689, which acts as the Proton donor. Cysteine 721 provides a ligand contact to Zn(2+).

This sequence belongs to the vitamin-B12 independent methionine synthase family. The cofactor is Zn(2+).

It carries out the reaction 5-methyltetrahydropteroyltri-L-glutamate + L-homocysteine = tetrahydropteroyltri-L-glutamate + L-methionine. It functions in the pathway amino-acid biosynthesis; L-methionine biosynthesis via de novo pathway; L-methionine from L-homocysteine (MetE route): step 1/1. Functionally, catalyzes the transfer of a methyl group from 5-methyltetrahydrofolate to homocysteine resulting in methionine formation. This is 5-methyltetrahydropteroyltriglutamate--homocysteine methyltransferase from Streptococcus gordonii (strain Challis / ATCC 35105 / BCRC 15272 / CH1 / DL1 / V288).